Consider the following 455-residue polypeptide: Peroxisomal membrane protein PEX3 (455 aa).

Over residues 113–125 (TVLSDDFSTSQEG) the composition is skewed to polar residues. Positions 113 to 135 (TVLSDDFSTSQEGAISEDTNKPP) are disordered. Residues 155 to 171 (FLTLIYCESLLIVFLHL) form a helical membrane-spanning segment.

This sequence belongs to the peroxin-3 family. As to quaternary structure, component of the peroxisomal docking complex, composed of at least PEX3, PEX13, PEX14 and PEX17. Component of the peroxisomal translocation complex, composed of at least PEX3, PEX2, PEX10 and PEX12. Interacts with PEX19. Interacts with the pexophagy receptor ATG30.

It is found in the peroxisome membrane. Functionally, peroxisomal membrane protein required for peroxisome biosynthesis. Shared component of both the peroxisomal docking complex and the peroxisomal translocation complex. The two types of peroxisomal matrix targeting signals, PTS1 and PTS2, are first recognized in the cytosol by their receptors PEX5 and PEX7, respectively, which then carry the cargo to the peroxisomal membrane. The peroxisomal targeting signal (PTS) receptor-cargo complexes interact with peroxisomal membrane protein (PMP) components of the docking complex. They have then additional downstream interactions with the translocation complex, leading to the transport of fully folded and oligomerized cargo into the peroxisome matrix. PEX3 acts as an anchoring site for PEX19 on the peroxisomal membrane and thus plays a crucial role in the assembly of the peroxisomal translocation complex. Is also essential for the interaction between the two complexes. Finally. PEX3 activates selective autophagy of peroxisomes (pexophagy) via interaction with the pexophagy receptor ATG30. The protein is Peroxisomal membrane protein PEX3 of Komagataella pastoris (Yeast).